Here is a 493-residue protein sequence, read N- to C-terminus: Aerolysin (493 aa).

The signal sequence occupies residues 1-23; sequence MQKIKLTGLSLIISGLLMAQAQA. 2 disulfide bridges follow: Cys-42-Cys-98 and Cys-182-Cys-187. The segment at 68-84 is interaction with host N-linked glycan; that stretch reads WQISGLANGWVIMGPGY. The part of the transmembrane beta-barrel after proteolytic activation of the toxin and insertion into the host membrane stretch occupies residues 256–288; the sequence is YGLSEKVTTKNKFKWPLVGETELSIEIAANQSW. The interaction with glycans from host GPI-anchor stretch occupies residues 346 to 355; that stretch reads RWGGNAWYTH. Positions 446–493 are excised as a propeptide; that stretch reads AADSKVRRARSVDGAGQGLRLEIPLDAQELSGLGFNNVSLSVTPAANQ.

The protein belongs to the aerolysin family. As to quaternary structure, homodimer in solution; homoheptamer in the host membrane. After binding to GPI-anchored proteins in target membranes and proteolytic removal of the C-terminal propeptide, the protein assembles into a heptameric pre-pore complex. A further conformation change leads to insertion into the host membrane. Proteolytic cleavage and subsequent release of the propeptide trigger a major conformation change, leading to the formation of a heptameric pre-pore that then inserts into the host membrane.

It is found in the secreted. The protein localises to the host cell membrane. In terms of biological role, secreted, cytolytic toxin that forms pores in host membranes after proteolytic removal of a C-terminal propeptide, leading to destruction of the membrane permeability barrier and host cell death. The pores are formed by transmembrane beta-strands and are approximately 3 nm in diameter. The sequence is that of Aerolysin (aerA) from Aeromonas hydrophila.